We begin with the raw amino-acid sequence, 283 residues long: Pantothenate synthetase (283 aa).

An ATP-binding site is contributed by 34 to 41 (MGALHEGH). His-41 (proton donor) is an active-site residue. Gln-65 contributes to the (R)-pantoate binding site. Gln-65 contributes to the beta-alanine binding site. 152 to 155 (GQKD) contacts ATP. Gln-158 is a binding site for (R)-pantoate. ATP contacts are provided by residues Val-181 and 189–192 (MSSR).

The protein belongs to the pantothenate synthetase family. Homodimer.

The protein localises to the cytoplasm. It carries out the reaction (R)-pantoate + beta-alanine + ATP = (R)-pantothenate + AMP + diphosphate + H(+). It participates in cofactor biosynthesis; (R)-pantothenate biosynthesis; (R)-pantothenate from (R)-pantoate and beta-alanine: step 1/1. Functionally, catalyzes the condensation of pantoate with beta-alanine in an ATP-dependent reaction via a pantoyl-adenylate intermediate. The protein is Pantothenate synthetase of Nitrobacter winogradskyi (strain ATCC 25391 / DSM 10237 / CIP 104748 / NCIMB 11846 / Nb-255).